Here is a 930-residue protein sequence, read N- to C-terminus: G patch domain-containing protein 1 (930 aa).

Residues 1 to 12 show a composition bias toward acidic residues; the sequence is MAALDSDSDEDL. Disordered stretches follow at residues 1–41 and 170–209; these read MAAL…TVRD and GVGP…EDDD. Ala-2 is modified (N-acetylalanine). Residues Ser-6 and Ser-8 each carry the phosphoserine modification. The 47-residue stretch at 152 to 198 folds into the G-patch domain; sequence KLSVGFELLRKMGWKEGQGVGPRVKRKARRQKPDPGVKIYGCALPPG. Lys-313 is covalently cross-linked (Glycyl lysine isopeptide (Lys-Gly) (interchain with G-Cter in SUMO2)). Phosphoserine is present on Ser-358. 4 disordered regions span residues 400-420, 465-486, 566-596, and 654-930; these read GKAG…SKRG, SLAQ…GHSS, SSRF…DKQS, and PEPA…LRRQ. The segment covering 465 to 478 has biased composition (low complexity); sequence SLAQSASSSRAQAS. 2 stretches are compositionally biased toward basic and acidic residues: residues 582–593 and 674–695; these read EVPRDQENDVSD and GSDK…KEDS. Ser-715 bears the Phosphoserine mark. Over residues 719–737 the composition is skewed to basic and acidic residues; the sequence is SKEEQAPEPRPDTTVDKAV. Positions 768 to 777 are enriched in acidic residues; it reads SEEEQDDSED. Residues 851–886 are compositionally biased toward basic residues; it reads KPKKSKERHKSKKEHRRKREKKKKHKKHKHKSKQKN. The segment covering 894-903 has biased composition (low complexity); sequence SSESTDSSDS. The segment covering 921–930 has biased composition (basic residues); sequence RLKCLPLRRQ.

This sequence belongs to the GPATCH1 family.

This is G patch domain-containing protein 1 (Gpatch1) from Mus musculus (Mouse).